The primary structure comprises 76 residues: Kappa-actitoxin-Avd4m (76 aa).

The signal sequence occupies residues 1-19 (MNKALFLCLVVLCAAVVFA). Positions 20–31 (AEDLQKAKHAPF) are excised as a propeptide. 3 disulfides stabilise this stretch: Cys37/Cys72, Cys39/Cys65, and Cys55/Cys73.

This sequence belongs to the sea anemone type 3 (BDS) potassium channel toxin family. As to expression, weakly expressed in the ectodermal tissue from the distal and proximal tentacles, body wall, and oral disk.

Its subcellular location is the secreted. The protein localises to the nematocyst. Functionally, blocks Kv3 voltage-gated potassium channels. Reduces blood pressure. The chain is Kappa-actitoxin-Avd4m from Anemonia viridis (Snakelocks anemone).